Here is a 35-residue protein sequence, read N- to C-terminus: Putative gastric cancer-related gene 224 protein (35 aa).

Expressed in gastric mucosa.

This chain is Putative gastric cancer-related gene 224 protein (GCRG224), found in Homo sapiens (Human).